A 607-amino-acid polypeptide reads, in one-letter code: TOM1-like protein 8 (607 aa).

In terms of domain architecture, VHS spans 9–138 (ATSDMLIGPD…ELLRAGIVFP (130 aa)). The disordered stretch occupies residues 141–175 (PQITPSSGQNGPSTRYPQNSRNARQEAIDTSTESE). Residues 175–263 (EFPTLSLTEI…LLAKHEAIAS (89 aa)) enclose the GAT domain. S297 carries the phosphoserine modification. Residues 355 to 379 (NNCESSTPTSNPHANHQKVQQNYSN) show a composition bias toward polar residues. 3 disordered regions span residues 355–393 (NNCE…YYGQ), 407–460 (QPSS…SPTH), and 555–582 (DNGN…NKKP). A Phosphoserine modification is found at S410. The span at 448–460 (QSPSSSPQYSPTH) shows a compositional bias: low complexity. Over residues 555 to 569 (DNGNNNTNPYQVSSH) the composition is skewed to polar residues.

It belongs to the TOM1 family. Specifically expressed in siliques and flowers.

It localises to the membrane. Its function is as follows. Might contribute to the loading of the ESCRT machinery. The chain is TOM1-like protein 8 from Arabidopsis thaliana (Mouse-ear cress).